The sequence spans 662 residues: Rap guanine nucleotide exchange factor-like 1 (662 aa).

The tract at residues 1 to 149 (MKPLEKFLKK…PPWAPLGAPE (149 aa)) is disordered. The span at 20 to 48 (VAGGPGGGLGSCGGPGGGGGPGGGGGPAG) shows a compositional bias: gly residues. Residues 49–64 (GQRSLQRRQSVSRLLL) are compositionally biased toward low complexity. A compositionally biased stretch (pro residues) spans 73 to 82 (AEPGLEPPVP). Residues 120–135 (LRSPSSYSSDELSPGE) show a composition bias toward low complexity. The region spanning 424–660 (EPEDVANHLT…FELSYKLEAN (237 aa)) is the Ras-GEF domain.

Probable guanine nucleotide exchange factor (GEF). In Homo sapiens (Human), this protein is Rap guanine nucleotide exchange factor-like 1 (RAPGEFL1).